The sequence spans 123 residues: MEEQKFHSLVKALNEHEGIEEVFLLNKDGSIIYKSGEFSLTDDEAKSILSAWKEKEPSLSFQNFRFAILKNDDLQLAAKNIGKGKGNIVGSITREGDYLIAHTRDEALILLEWSIFINKVAWS.

Belongs to the Asgard profilin family.

It is found in the cytoplasm. It localises to the cytoskeleton. In terms of biological role, binds to actin and affects the structure of the cytoskeleton. At high concentrations inhibits spontaneous rabbit actin nucleation. This strongly suggests this archaea has a profilin-regulated actin system, and actin-type genes can be identified in this organism. This Lokiarchaeum sp. (strain GC14_75) protein is Loki profilin-3.